The sequence spans 637 residues: Transcription factor GLABRA 3 (637 aa).

Positions aspartate 437–leucine 486 constitute a bHLH domain. The disordered stretch occupies residues arginine 497–arginine 521. The segment at asparagine 541–cysteine 637 is binding with MYB0/GL1 and MYB23.

Efficient DNA binding requires dimerization with another bHLH protein. Homodimer and heterodimer with BHLH2. Interacts directly with TTG1 and MYB0/GL1 to form a complex. Its interaction with TRY prevents MYB0/GL1 binding. Interacts with MYB75/PAP1, MYB90/PAP2, TT2, CPC, MYB23 and MYB66/WER. Interacts with MYB82. In terms of tissue distribution, mostly expressed in roots and flowers. Also present in stems and leaves, and, to a lower extent, in hypocotyls. Expressed in epidermal root hair cells (trichoblasts) and moves to root hairless cells (atrichoblasts) by a cell-to-cell movement through plasmodesmata (at protein level).

It is found in the nucleus. Transcription activator, when associated with MYB75/PAP1, MYB90/PAP2 or TT2. Involved in epidermal cell fate specification. Negatively regulates stomata formation, but, in association with TTG1 and MYB0/GL1, promotes trichome formation, branching and endoreplication. Also regulates trichome cell wall maturation. Together with MYB66/WER, promotes the formation of non-hair cells in root epidermis cells in the N position. Whereas together with CPC, promotes the formation of hair cells in root epidermis cells in the H position by inhibiting non-hair cell formation. Also seems to play a role in the activation of anthocyanin biosynthesis, probably together with MYB75/PAP1. Activates the transcription of GL2. The sequence is that of Transcription factor GLABRA 3 (GL3) from Arabidopsis thaliana (Mouse-ear cress).